The primary structure comprises 476 residues: MSIPRLKSYFTILATVLVLGQAVSAQAAELPDFTQLVEQASPAVVNISTTQKLPDRRVSNSAQMPDLEGLPPMLREFFERGMPQPRSPRGDRQREAQSLGSGFIISADGYILTNNHVIADADEILVRLADRSELKAKLIGTDPRSDVALLKIDGKDLPVLKLGKSQDLKAGQWVVAIGSPFGFDHTVTQGIVSAIGRSLPNENYVPFIQTDVPINPGNSGGPLFNLAGEVVGINSQIYTRSGGFMGVSFAIPIDVAMDVSNQLKTGGKVSRGWLGVVIQEVNKDLAESFGLEKPAGALVAQIQDDGPAAKGGLQVGDVILSLNGQPIVMSADLPHLVGALKAGAKANLEVIRDGKRKNVELTVGAIPEEDKDLSMLPKSGVERSSNRLGVAVVELNDEQKKAFDLKGGVVIKEVQDGPAALIGLQPGDVITHLNNQAITSAKEFTEIAKALPKNRSVSMRVLRQGRASFITFKLAE.

A signal peptide spans Met1–Ala27. Active-site charge relay system residues include His116, Asp146, and Ser219. Residues Gly217–Ser219 and Leu274–Ile278 each bind substrate. 2 consecutive PDZ domains span residues Leu263 to Gly354 and Glu360 to Gly465.

It belongs to the peptidase S1C family.

The protein localises to the periplasm. It carries out the reaction Acts on substrates that are at least partially unfolded. The cleavage site P1 residue is normally between a pair of hydrophobic residues, such as Val-|-Val.. Its function is as follows. Might be efficient in the degradation of transiently denatured and unfolded proteins which accumulate in the periplasm following stress conditions. The polypeptide is Probable periplasmic serine endoprotease DegP-like (mucD) (Pseudomonas fluorescens (strain ATCC BAA-477 / NRRL B-23932 / Pf-5)).